The following is a 312-amino-acid chain: Acetyl-coenzyme A carboxylase carboxyl transferase subunit alpha (312 aa).

The CoA carboxyltransferase C-terminal domain maps to 36 to 286 (NLEKEISKTY…ADYVKKSLNE (251 aa)).

Belongs to the AccA family. Acetyl-CoA carboxylase is a heterohexamer composed of biotin carboxyl carrier protein (AccB), biotin carboxylase (AccC) and two subunits each of ACCase subunit alpha (AccA) and ACCase subunit beta (AccD).

The protein resides in the cytoplasm. The catalysed reaction is N(6)-carboxybiotinyl-L-lysyl-[protein] + acetyl-CoA = N(6)-biotinyl-L-lysyl-[protein] + malonyl-CoA. The protein operates within lipid metabolism; malonyl-CoA biosynthesis; malonyl-CoA from acetyl-CoA: step 1/1. In terms of biological role, component of the acetyl coenzyme A carboxylase (ACC) complex. First, biotin carboxylase catalyzes the carboxylation of biotin on its carrier protein (BCCP) and then the CO(2) group is transferred by the carboxyltransferase to acetyl-CoA to form malonyl-CoA. The protein is Acetyl-coenzyme A carboxylase carboxyl transferase subunit alpha of Campylobacter jejuni subsp. doylei (strain ATCC BAA-1458 / RM4099 / 269.97).